The primary structure comprises 421 residues: Gamma-glutamyl phosphate reductase (421 aa).

Belongs to the gamma-glutamyl phosphate reductase family.

It localises to the cytoplasm. The catalysed reaction is L-glutamate 5-semialdehyde + phosphate + NADP(+) = L-glutamyl 5-phosphate + NADPH + H(+). It participates in amino-acid biosynthesis; L-proline biosynthesis; L-glutamate 5-semialdehyde from L-glutamate: step 2/2. In terms of biological role, catalyzes the NADPH-dependent reduction of L-glutamate 5-phosphate into L-glutamate 5-semialdehyde and phosphate. The product spontaneously undergoes cyclization to form 1-pyrroline-5-carboxylate. The sequence is that of Gamma-glutamyl phosphate reductase from Leptospira biflexa serovar Patoc (strain Patoc 1 / ATCC 23582 / Paris).